Consider the following 541-residue polypeptide: Putative transferase YhbX (541 aa).

The Periplasmic segment spans residues 1-60 (MTVFNKFARTFKSHWLLYLCVIVFGITNLVASSGAHMVQRLLFFVLTILVVKRISSLPLR). The chain crosses the membrane as a helical span at residues 61-81 (LLVAAPFVLLTAADMSISLYS). Residues 82 to 110 (WCTFGTTFNDGFAISVLQSDPDEVVKMLG) are Cytoplasmic-facing. The chain crosses the membrane as a helical span at residues 111–131 (MYIPYLCAFAFLSLLFLAVII). Residues 132 to 141 (KYDVSLPTKK) lie on the Periplasmic side of the membrane. Residues 142-162 (VTGILLLIVISGSLFSACQFA) form a helical membrane-spanning segment. Residues 163-264 (YKDAKNKKAF…RKQIKLFNQA (102 aa)) are Cytoplasmic-facing. Residues 265–285 (ISGAPYTALSVPLSLTADSVL) traverse the membrane as a helical segment. The Periplasmic portion of the chain corresponds to 286–541 (SHDIHNYPDN…QGNPTPEGQG (256 aa)).

This sequence belongs to the phosphoethanolamine transferase family.

The protein resides in the cell inner membrane. Its function is as follows. Probably does not transfer phosphoethanolamine to lipid A. This chain is Putative transferase YhbX (yhbX), found in Escherichia coli (strain K12).